Here is a 493-residue protein sequence, read N- to C-terminus: Glutamate--tRNA ligase (493 aa).

The 'HIGH' region motif lies at 10 to 20 (PSPTGDPHVGT). The 'KMSKS' region signature appears at 251–255 (KLSKR). Lysine 254 is a binding site for ATP.

This sequence belongs to the class-I aminoacyl-tRNA synthetase family. Glutamate--tRNA ligase type 1 subfamily. In terms of assembly, monomer.

The protein resides in the cytoplasm. It carries out the reaction tRNA(Glu) + L-glutamate + ATP = L-glutamyl-tRNA(Glu) + AMP + diphosphate. Its function is as follows. Catalyzes the attachment of glutamate to tRNA(Glu) in a two-step reaction: glutamate is first activated by ATP to form Glu-AMP and then transferred to the acceptor end of tRNA(Glu). In Pseudomonas syringae pv. syringae (strain B728a), this protein is Glutamate--tRNA ligase.